Here is a 305-residue protein sequence, read N- to C-terminus: Ferredoxin--NADP reductase (305 aa).

Residues Glu31, Tyr42, Val82, and Asp274 each coordinate FAD.

It belongs to the ferredoxin--NADP reductase type 2 family. Homodimer. FAD is required as a cofactor.

It carries out the reaction 2 reduced [2Fe-2S]-[ferredoxin] + NADP(+) + H(+) = 2 oxidized [2Fe-2S]-[ferredoxin] + NADPH. The sequence is that of Ferredoxin--NADP reductase from Ignicoccus hospitalis (strain KIN4/I / DSM 18386 / JCM 14125).